The sequence spans 420 residues: Phosphoribosylamine--glycine ligase (420 aa).

The region spanning 108-314 is the ATP-grasp domain; sequence KQFMEKYAIP…FAALIDALLH (207 aa). 134–195 lines the ATP pocket; that stretch reads LNERGVPIVI…EDFLAGEEFS (62 aa). 2 residues coordinate Mg(2+): E284 and N286.

The protein belongs to the GARS family. The cofactor is Mg(2+). Requires Mn(2+) as cofactor.

The catalysed reaction is 5-phospho-beta-D-ribosylamine + glycine + ATP = N(1)-(5-phospho-beta-D-ribosyl)glycinamide + ADP + phosphate + H(+). Its pathway is purine metabolism; IMP biosynthesis via de novo pathway; N(1)-(5-phospho-D-ribosyl)glycinamide from 5-phospho-alpha-D-ribose 1-diphosphate: step 2/2. The polypeptide is Phosphoribosylamine--glycine ligase (Listeria monocytogenes serovar 1/2a (strain ATCC BAA-679 / EGD-e)).